We begin with the raw amino-acid sequence, 364 residues long: Baseplate tail-tube junction protein gp48 (364 aa).

As to quaternary structure, homohexamer. The tube first annulus is composed of a gp48 hexameric ring. Interacts with gp54. Part of the baseplate macromolecular complex which consists of gp5, gp5.4, gp27 (central spike complex); gp6, gp25, gp53 (inner baseplate); gp7, gp8 (intermediate baseplate); gp9, gp10, gp11, gp12 (peripheral); gp48 and gp54 (proximal region of the tail tube).

Its subcellular location is the virion. In terms of biological role, baseplate protein that forms, together with gp54, the baseplate-tail tube junction. The tail tube first 2 annuli are formed by gp48 and gp54, which are in continuation of the spike complex. Involved in the tail assembly. Morphogenesis of the baseplate is completed by association of gp48 and gp54, which bind the upper part of the baseplate dome to form the platform for polymerization of the tail tube. The chain is Baseplate tail-tube junction protein gp48 (48) from Escherichia coli (Bacteriophage T4).